Consider the following 364-residue polypeptide: tRNA 2-selenouridine synthase (364 aa).

In terms of domain architecture, Rhodanese spans 14 to 137 (LIADTPIIDV…LRQTTIQATI (124 aa)). The S-selanylcysteine intermediate role is filled by Cys-97.

This sequence belongs to the SelU family. Monomer.

The catalysed reaction is 5-methylaminomethyl-2-thiouridine(34) in tRNA + selenophosphate + (2E)-geranyl diphosphate + H2O + H(+) = 5-methylaminomethyl-2-selenouridine(34) in tRNA + (2E)-thiogeraniol + phosphate + diphosphate. The enzyme catalyses 5-methylaminomethyl-2-thiouridine(34) in tRNA + (2E)-geranyl diphosphate = 5-methylaminomethyl-S-(2E)-geranyl-thiouridine(34) in tRNA + diphosphate. It carries out the reaction 5-methylaminomethyl-S-(2E)-geranyl-thiouridine(34) in tRNA + selenophosphate + H(+) = 5-methylaminomethyl-2-(Se-phospho)selenouridine(34) in tRNA + (2E)-thiogeraniol. It catalyses the reaction 5-methylaminomethyl-2-(Se-phospho)selenouridine(34) in tRNA + H2O = 5-methylaminomethyl-2-selenouridine(34) in tRNA + phosphate. Involved in the post-transcriptional modification of the uridine at the wobble position (U34) of tRNA(Lys), tRNA(Glu) and tRNA(Gln). Catalyzes the conversion of 2-thiouridine (S2U-RNA) to 2-selenouridine (Se2U-RNA). Acts in a two-step process involving geranylation of 2-thiouridine (S2U) to S-geranyl-2-thiouridine (geS2U) and subsequent selenation of the latter derivative to 2-selenouridine (Se2U) in the tRNA chain. This is tRNA 2-selenouridine synthase from Escherichia coli (strain 55989 / EAEC).